A 440-amino-acid chain; its full sequence is MRCEVAPVLTGTPLLPATPPGPVLLAYSGGMDSSVLLHLLAARPRYRHAGLRALHVHHGLHADADAWAAHCQRTCDALQVPLQIVRVQVARDSGLGLEAAARNARHAAFAQALIAGEWLALAHHRDDQAETFLLRALRASGPEGLAAMRPQRPFASGTLWRPMLAHARADLLAYAHAHRLRWIDDPSNTDPRHDRNFLRSQVLPLLQQRWPQATDALARSAQLSADASALLLQQDMALLPGVLTASGALDLQALRAQSVERRARLLRAWVSAAHAPPLPAHGVAALEQEIDNHAADRHACFAWQQVEVRRWRQCLFLHRPAAAWPSDWHAQWDGAAPLQLPDGAQLRLLGAPGLRFAQPLLVRARQGGERIVLPQRGHSHQLKHLLQALDLPPWERERLPVLWEGAQVLAAGDCIISGTLDAWLQANAAALQWRTAADAN.

Residue 28–33 (SGGMDS) participates in ATP binding.

It belongs to the tRNA(Ile)-lysidine synthase family.

It localises to the cytoplasm. The enzyme catalyses cytidine(34) in tRNA(Ile2) + L-lysine + ATP = lysidine(34) in tRNA(Ile2) + AMP + diphosphate + H(+). In terms of biological role, ligates lysine onto the cytidine present at position 34 of the AUA codon-specific tRNA(Ile) that contains the anticodon CAU, in an ATP-dependent manner. Cytidine is converted to lysidine, thus changing the amino acid specificity of the tRNA from methionine to isoleucine. The chain is tRNA(Ile)-lysidine synthase from Xanthomonas axonopodis pv. citri (strain 306).